Here is a 115-residue protein sequence, read N- to C-terminus: Large ribosomal subunit protein bL19 (115 aa).

It belongs to the bacterial ribosomal protein bL19 family.

Its function is as follows. This protein is located at the 30S-50S ribosomal subunit interface and may play a role in the structure and function of the aminoacyl-tRNA binding site. In Francisella tularensis subsp. tularensis (strain FSC 198), this protein is Large ribosomal subunit protein bL19.